A 417-amino-acid chain; its full sequence is Serine protease hepsin (417 aa).

The Cytoplasmic portion of the chain corresponds to 1 to 23; that stretch reads MAQKEGGRTVPCCSRPKVAALTA. A helical; Signal-anchor for type II membrane protein membrane pass occupies residues 24 to 44; it reads GTLLLLTAIGAASWAIVAVLL. Topologically, residues 45–417 are extracellular; the sequence is RSDQEPLYPV…SEASGMVTQL (373 aa). The 98-residue stretch at 54–151 folds into the SRCR domain; sequence VQVSSADARL…RGRFLATICQ (98 aa). 8 disulfide bridges follow: C77–C140, C90–C150, C119–C138, C153–C277, C188–C204, C291–C359, C322–C338, and C349–C381. N112 is a glycosylation site (N-linked (GlcNAc...) asparagine). A Peptidase S1 domain is found at 163–405; that stretch reads IVGGRDTSLG…FREWIFQAIK (243 aa). Residues H203 and D257 each act as charge relay system in the active site. S353 acts as the Charge relay system in catalysis.

It belongs to the peptidase S1 family.

It is found in the membrane. It catalyses the reaction Cleavage after basic amino-acid residues, with Arg strongly preferred to Lys.. Its function is as follows. Plays an essential role in cell growth and maintenance of cell morphology. May mediate the activating cleavage of HGF and MST1/HGFL. Plays a role in the proteolytic processing of ACE2. The chain is Serine protease hepsin (HPN) from Pongo abelii (Sumatran orangutan).